We begin with the raw amino-acid sequence, 504 residues long: Peptidyl-prolyl cis-trans isomerase-like 4 (504 aa).

The region spanning 1-169 (MSVMLETSLG…QNIRIRHVEI (169 aa)) is the PPIase cyclophilin-type domain. Positions 246–324 (NILFVCKLNP…RRIWVDFSQS (79 aa)) constitute an RRM domain. Polar residues predominate over residues 330 to 339 (RSMLSSSNPT). Positions 330 to 504 (RSMLSSSNPT…RERDDRDRRR (175 aa)) are disordered. The segment covering 340-354 (GRGGRGGRGGRGGNY) has biased composition (gly residues). 2 stretches are compositionally biased toward basic and acidic residues: residues 356 to 381 (GRRDGDRDRDRDSGWSSRRDAPDSRR) and 416 to 504 (SKRD…DRRR).

The protein belongs to the cyclophilin-type PPIase family. PPIL4 subfamily.

The protein localises to the nucleus. It carries out the reaction [protein]-peptidylproline (omega=180) = [protein]-peptidylproline (omega=0). Its function is as follows. PPIases accelerate the folding of proteins. It catalyzes the cis-trans isomerization of proline imidic peptide bonds in oligopeptides. This is Peptidyl-prolyl cis-trans isomerase-like 4 (CYP6) from Cryptococcus neoformans var. neoformans serotype D (strain B-3501A) (Filobasidiella neoformans).